The following is a 446-amino-acid chain: Amino-acid acetyltransferase (446 aa).

An N-acetyltransferase domain is found at 299–438 (EQVRDAEIDD…QKLYNFQRKS (140 aa)).

Belongs to the acetyltransferase family. ArgA subfamily.

It localises to the cytoplasm. The enzyme catalyses L-glutamate + acetyl-CoA = N-acetyl-L-glutamate + CoA + H(+). The protein operates within amino-acid biosynthesis; L-arginine biosynthesis; N(2)-acetyl-L-ornithine from L-glutamate: step 1/4. The sequence is that of Amino-acid acetyltransferase from Aliivibrio fischeri (strain ATCC 700601 / ES114) (Vibrio fischeri).